Here is an 83-residue protein sequence, read N- to C-terminus: Cytochrome c5 (83 aa).

Cysteine 15, cysteine 18, histidine 19, and methionine 59 together coordinate heme c. A disulfide bridge links cysteine 65 with cysteine 68.

It belongs to the cytochrome c family. As to quaternary structure, homodimer. Post-translationally, binds 1 heme c group covalently per subunit.

It is unreactive with cytochrome c reductase or oxidase. The chain is Cytochrome c5 from Azotobacter vinelandii.